The following is a 333-amino-acid chain: N-acetyl-gamma-glutamyl-phosphate reductase (333 aa).

Cys136 is an active-site residue.

It belongs to the NAGSA dehydrogenase family. Type 1 subfamily.

The protein resides in the cytoplasm. It catalyses the reaction N-acetyl-L-glutamate 5-semialdehyde + phosphate + NADP(+) = N-acetyl-L-glutamyl 5-phosphate + NADPH + H(+). It functions in the pathway amino-acid biosynthesis; L-arginine biosynthesis; N(2)-acetyl-L-ornithine from L-glutamate: step 3/4. In terms of biological role, catalyzes the NADPH-dependent reduction of N-acetyl-5-glutamyl phosphate to yield N-acetyl-L-glutamate 5-semialdehyde. This chain is N-acetyl-gamma-glutamyl-phosphate reductase, found in Xylella fastidiosa (strain 9a5c).